Here is a 492-residue protein sequence, read N- to C-terminus: Ribose import ATP-binding protein RbsA (492 aa).

ABC transporter domains follow at residues 3 to 239 (IDMR…VGRK) and 238 to 492 (RKLE…TGGK). Residue 35 to 42 (GENGAGKS) participates in ATP binding.

Belongs to the ABC transporter superfamily. Ribose importer (TC 3.A.1.2.1) family. In terms of assembly, the complex is composed of an ATP-binding protein (RbsA), two transmembrane proteins (RbsC) and a solute-binding protein (RbsB).

Its subcellular location is the cell membrane. It catalyses the reaction D-ribose(out) + ATP + H2O = D-ribose(in) + ADP + phosphate + H(+). Its function is as follows. Part of the ABC transporter complex RbsABC involved in ribose import. Responsible for energy coupling to the transport system. The protein is Ribose import ATP-binding protein RbsA of Streptococcus agalactiae serotype V (strain ATCC BAA-611 / 2603 V/R).